Here is a 302-residue protein sequence, read N- to C-terminus: Glutaminase (302 aa).

Positions 61, 111, 155, 162, 186, 238, and 256 each coordinate substrate.

This sequence belongs to the glutaminase family. Homotetramer.

The catalysed reaction is L-glutamine + H2O = L-glutamate + NH4(+). This Ectopseudomonas mendocina (strain ymp) (Pseudomonas mendocina) protein is Glutaminase.